Here is a 213-residue protein sequence, read N- to C-terminus: Deoxyribose-phosphate aldolase (213 aa).

Residue aspartate 89 is the Proton donor/acceptor of the active site. Lysine 151 serves as the catalytic Schiff-base intermediate with acetaldehyde. The active-site Proton donor/acceptor is lysine 180.

It belongs to the DeoC/FbaB aldolase family. DeoC type 1 subfamily.

The protein resides in the cytoplasm. It catalyses the reaction 2-deoxy-D-ribose 5-phosphate = D-glyceraldehyde 3-phosphate + acetaldehyde. Its pathway is carbohydrate degradation; 2-deoxy-D-ribose 1-phosphate degradation; D-glyceraldehyde 3-phosphate and acetaldehyde from 2-deoxy-alpha-D-ribose 1-phosphate: step 2/2. Functionally, catalyzes a reversible aldol reaction between acetaldehyde and D-glyceraldehyde 3-phosphate to generate 2-deoxy-D-ribose 5-phosphate. This is Deoxyribose-phosphate aldolase from Finegoldia magna (strain ATCC 29328 / DSM 20472 / WAL 2508) (Peptostreptococcus magnus).